The following is a 261-amino-acid chain: Carnitinyl-CoA dehydratase (261 aa).

Glutamate 111 serves as the catalytic Nucleophile. Glutamate 131 (proton acceptor) is an active-site residue.

The protein belongs to the enoyl-CoA hydratase/isomerase family.

The catalysed reaction is (R)-carnitinyl-CoA = crotonobetainyl-CoA + H2O. Its pathway is amine and polyamine metabolism; carnitine metabolism. Catalyzes the reversible dehydration of L-carnitinyl-CoA to crotonobetainyl-CoA. This is Carnitinyl-CoA dehydratase from Shigella flexneri.